Here is a 544-residue protein sequence, read N- to C-terminus: Methionine--tRNA ligase (544 aa).

Positions 10 to 20 (PYANGSLHLGH) match the 'HIGH' region motif. Positions 141, 144, 153, and 156 each coordinate Zn(2+). Positions 329–333 (KLSTS) match the 'KMSKS' region motif. T332 contacts ATP.

Belongs to the class-I aminoacyl-tRNA synthetase family. MetG type 1 subfamily. As to quaternary structure, monomer. Requires Zn(2+) as cofactor.

It is found in the cytoplasm. It carries out the reaction tRNA(Met) + L-methionine + ATP = L-methionyl-tRNA(Met) + AMP + diphosphate. Functionally, is required not only for elongation of protein synthesis but also for the initiation of all mRNA translation through initiator tRNA(fMet) aminoacylation. This is Methionine--tRNA ligase from Bacillus mycoides (strain KBAB4) (Bacillus weihenstephanensis).